We begin with the raw amino-acid sequence, 30 residues long: Cytochrome c oxidase subunit 5C (30 aa).

Residues 15–30 form a helical membrane-spanning segment; sequence VVKELVIXXXLGLXAG.

Belongs to the cytochrome c oxidase subunit 5C family.

It is found in the mitochondrion inner membrane. Its function is as follows. This protein is one of the nuclear-coded polypeptide chains of cytochrome c oxidase, the terminal oxidase in mitochondrial electron transport. The polypeptide is Cytochrome c oxidase subunit 5C (COX5C) (Solanum tuberosum (Potato)).